Consider the following 295-residue polypeptide: Small ribosomal subunit protein uS2 (295 aa).

Residues 261 to 295 (QAKKFSKTKNIDEETNTEFEQVLNDADENKNSDNA) are disordered.

It belongs to the universal ribosomal protein uS2 family.

This Rickettsia rickettsii (strain Sheila Smith) protein is Small ribosomal subunit protein uS2.